A 246-amino-acid chain; its full sequence is Probable hydroxyethylthiazole kinase (246 aa).

M50 contributes to the substrate binding site. ATP-binding residues include R125 and T145. A substrate-binding site is contributed by G172.

Belongs to the Thz kinase family. Mg(2+) is required as a cofactor.

It carries out the reaction 5-(2-hydroxyethyl)-4-methylthiazole + ATP = 4-methyl-5-(2-phosphooxyethyl)-thiazole + ADP + H(+). The protein operates within cofactor biosynthesis; thiamine diphosphate biosynthesis; 4-methyl-5-(2-phosphoethyl)-thiazole from 5-(2-hydroxyethyl)-4-methylthiazole: step 1/1. Functionally, catalyzes the phosphorylation of the hydroxyl group of 4-methyl-5-beta-hydroxyethylthiazole (THZ). In Agrobacterium fabrum (strain C58 / ATCC 33970) (Agrobacterium tumefaciens (strain C58)), this protein is Probable hydroxyethylthiazole kinase (thiM).